A 229-amino-acid chain; its full sequence is ATP synthase subunit a (229 aa).

Helical transmembrane passes span Ala-25–Ala-45, Phe-82–Val-102, Gly-104–Val-124, Phe-142–Leu-162, Leu-181–Met-201, and Gly-202–Gln-222.

Belongs to the ATPase A chain family. F-type ATPases have 2 components, CF(1) - the catalytic core - and CF(0) - the membrane proton channel. CF(1) has five subunits: alpha(3), beta(3), gamma(1), delta(1), epsilon(1). CF(0) has three main subunits: a(1), b(2) and c(9-12). The alpha and beta chains form an alternating ring which encloses part of the gamma chain. CF(1) is attached to CF(0) by a central stalk formed by the gamma and epsilon chains, while a peripheral stalk is formed by the delta and b chains.

Its subcellular location is the cell inner membrane. Its function is as follows. Key component of the proton channel; it plays a direct role in the translocation of protons across the membrane. In Citrifermentans bemidjiense (strain ATCC BAA-1014 / DSM 16622 / JCM 12645 / Bem) (Geobacter bemidjiensis), this protein is ATP synthase subunit a.